A 159-amino-acid chain; its full sequence is 3-hydroxyacyl-[acyl-carrier-protein] dehydratase FabZ (159 aa).

Residue His65 is part of the active site.

This sequence belongs to the thioester dehydratase family. FabZ subfamily.

The protein resides in the cytoplasm. It catalyses the reaction a (3R)-hydroxyacyl-[ACP] = a (2E)-enoyl-[ACP] + H2O. Functionally, involved in unsaturated fatty acids biosynthesis. Catalyzes the dehydration of short chain beta-hydroxyacyl-ACPs and long chain saturated and unsaturated beta-hydroxyacyl-ACPs. The sequence is that of 3-hydroxyacyl-[acyl-carrier-protein] dehydratase FabZ from Microcystis aeruginosa (strain NIES-843 / IAM M-2473).